The following is a 261-amino-acid chain: Acetylglutamate kinase (261 aa).

Substrate is bound by residues 41 to 42, Arg63, and Asn157; that span reads GG.

The protein belongs to the acetylglutamate kinase family. ArgB subfamily.

It localises to the cytoplasm. The enzyme catalyses N-acetyl-L-glutamate + ATP = N-acetyl-L-glutamyl 5-phosphate + ADP. The protein operates within amino-acid biosynthesis; L-arginine biosynthesis; N(2)-acetyl-L-ornithine from L-glutamate: step 2/4. In terms of biological role, catalyzes the ATP-dependent phosphorylation of N-acetyl-L-glutamate. The protein is Acetylglutamate kinase of Koribacter versatilis (strain Ellin345).